The primary structure comprises 941 residues: Glycine dehydrogenase (decarboxylating) (941 aa).

Position 692 is an N6-(pyridoxal phosphate)lysine (lysine 692).

This sequence belongs to the GcvP family. In terms of assembly, the glycine cleavage system is composed of four proteins: P, T, L and H. Requires pyridoxal 5'-phosphate as cofactor.

It catalyses the reaction N(6)-[(R)-lipoyl]-L-lysyl-[glycine-cleavage complex H protein] + glycine + H(+) = N(6)-[(R)-S(8)-aminomethyldihydrolipoyl]-L-lysyl-[glycine-cleavage complex H protein] + CO2. The glycine cleavage system catalyzes the degradation of glycine. The P protein binds the alpha-amino group of glycine through its pyridoxal phosphate cofactor; CO(2) is released and the remaining methylamine moiety is then transferred to the lipoamide cofactor of the H protein. This is Glycine dehydrogenase (decarboxylating) from Mycobacterium avium (strain 104).